The chain runs to 329 residues: Peroxidase 73 (329 aa).

An N-terminal signal peptide occupies residues 1–25; that stretch reads MARFSLVVVVTLSLAISMFPDTTTA. Disulfide bonds link C36/C119, C69/C74, C125/C325, and C204/C236. Catalysis depends on H67, which acts as the Proton acceptor. The Ca(2+) site is built by D68, V71, G73, D75, and S77. Substrate is bound at residue P167. A heme b-binding site is contributed by H197. T198 is a binding site for Ca(2+). Residue N215 is glycosylated (N-linked (GlcNAc...) asparagine). Residues D249, T252, and D257 each coordinate Ca(2+).

It belongs to the peroxidase family. Classical plant (class III) peroxidase subfamily. The cofactor is heme b. Ca(2+) is required as a cofactor. In terms of tissue distribution, expressed in the whole plant, with the highest expression in roots.

It is found in the secreted. The catalysed reaction is 2 a phenolic donor + H2O2 = 2 a phenolic radical donor + 2 H2O. Removal of H(2)O(2), oxidation of toxic reductants, biosynthesis and degradation of lignin, suberization, auxin catabolism, response to environmental stresses such as wounding, pathogen attack and oxidative stress. These functions might be dependent on each isozyme/isoform in each plant tissue. This chain is Peroxidase 73 (PER73), found in Arabidopsis thaliana (Mouse-ear cress).